A 165-amino-acid polypeptide reads, in one-letter code: CDP-archaeol synthase (165 aa).

A run of 3 helical transmembrane segments spans residues 4-24 (IVQL…AVLA), 78-98 (LLDA…GAFV), and 118-138 (FLLM…PLLL).

Belongs to the CDP-archaeol synthase family. Requires Mg(2+) as cofactor.

It is found in the cell membrane. The catalysed reaction is 2,3-bis-O-(geranylgeranyl)-sn-glycerol 1-phosphate + CTP + H(+) = CDP-2,3-bis-O-(geranylgeranyl)-sn-glycerol + diphosphate. It functions in the pathway membrane lipid metabolism; glycerophospholipid metabolism. Its function is as follows. Catalyzes the formation of CDP-2,3-bis-(O-geranylgeranyl)-sn-glycerol (CDP-archaeol) from 2,3-bis-(O-geranylgeranyl)-sn-glycerol 1-phosphate (DGGGP) and CTP. This reaction is the third ether-bond-formation step in the biosynthesis of archaeal membrane lipids. The protein is CDP-archaeol synthase of Pyrobaculum calidifontis (strain DSM 21063 / JCM 11548 / VA1).